Here is a 418-residue protein sequence, read N- to C-terminus: Elongation factor 1-gamma 1 (418 aa).

The region spanning 1 to 82 is the GST N-terminal domain; the sequence is MALVLHTFDG…YVTRSKSDNP (82 aa). The 127-residue stretch at 87-213 folds into the GST C-terminal domain; sequence SLIEYAHIEQ…GDVKQADSVP (127 aa). The segment at 211 to 265 is disordered; sequence SVPQVQKKAAAPKEQKPKEAKKEAPKEAPKPKAAEKPEEEEEAPKPKPKNPLDLL. Over residues 221 to 246 the composition is skewed to basic and acidic residues; it reads APKEQKPKEAKKEAPKEAPKPKAAEK. The region spanning 258–418 is the EF-1-gamma C-terminal domain; the sequence is PKNPLDLLPP…EALLDAKCFK (161 aa).

In terms of assembly, EF-1 is composed of four subunits: alpha, beta, delta, and gamma.

Its function is as follows. Probably plays a role in anchoring the complex to other cellular components. The protein is Elongation factor 1-gamma 1 of Oryza sativa subsp. japonica (Rice).